Reading from the N-terminus, the 121-residue chain is Holo-[acyl-carrier-protein] synthase (121 aa).

Residues Asp8 and Glu58 each coordinate Mg(2+).

This sequence belongs to the P-Pant transferase superfamily. AcpS family. Requires Mg(2+) as cofactor.

Its subcellular location is the cytoplasm. The enzyme catalyses apo-[ACP] + CoA = holo-[ACP] + adenosine 3',5'-bisphosphate + H(+). Transfers the 4'-phosphopantetheine moiety from coenzyme A to a Ser of acyl-carrier-protein. The polypeptide is Holo-[acyl-carrier-protein] synthase (Bacillus pumilus (strain SAFR-032)).